The sequence spans 994 residues: Valine--tRNA ligase (994 aa).

A 'HIGH' region motif is present at residues 43 to 53 (PNVTGTLHMGH). Over residues 329–345 (QSGMPSGATSDTTNTPS) the composition is skewed to polar residues. The interval 329–355 (QSGMPSGATSDTTNTPSDPEASSAANQ) is disordered. The 'KMSKS' region signature appears at 585 to 589 (KMSKS). Lys-588 is an ATP binding site. The segment at 692–714 (AHSPAQHQAGQDGQDAPRTPQPR) is disordered. Positions 696–707 (AQHQAGQDGQDA) are enriched in low complexity. Positions 928 to 994 (LIDVDAERVR…NGLRERRATL (67 aa)) form a coiled coil.

Belongs to the class-I aminoacyl-tRNA synthetase family. ValS type 1 subfamily. In terms of assembly, monomer.

It localises to the cytoplasm. It carries out the reaction tRNA(Val) + L-valine + ATP = L-valyl-tRNA(Val) + AMP + diphosphate. In terms of biological role, catalyzes the attachment of valine to tRNA(Val). As ValRS can inadvertently accommodate and process structurally similar amino acids such as threonine, to avoid such errors, it has a 'posttransfer' editing activity that hydrolyzes mischarged Thr-tRNA(Val) in a tRNA-dependent manner. The chain is Valine--tRNA ligase from Xylella fastidiosa (strain 9a5c).